The following is a 122-amino-acid chain: UPF0382 membrane protein SE_0353 (122 aa).

4 helical membrane passes run 3–23, 46–66, 69–89, and 98–118; these read VFII…AFGA, MYHG…SINV, AGWL…FLAL, and ITPI…IATL.

It belongs to the UPF0382 family.

Its subcellular location is the cell membrane. This Staphylococcus epidermidis (strain ATCC 12228 / FDA PCI 1200) protein is UPF0382 membrane protein SE_0353.